Here is a 569-residue protein sequence, read N- to C-terminus: Urease subunit alpha (569 aa).

The Urease domain occupies 131–569 (GGIDTHIHFI…LPLAQRYLLL (439 aa)). Positions 136, 138, and 219 each coordinate Ni(2+). Lys-219 is subject to N6-carboxylysine. Residue His-221 participates in substrate binding. Positions 248 and 274 each coordinate Ni(2+). Catalysis depends on His-322, which acts as the Proton donor. Asp-362 contacts Ni(2+).

The protein belongs to the metallo-dependent hydrolases superfamily. Urease alpha subunit family. In terms of assembly, heterotrimer of UreA (gamma), UreB (beta) and UreC (alpha) subunits. Three heterotrimers associate to form the active enzyme. Ni cation serves as cofactor. In terms of processing, carboxylation allows a single lysine to coordinate two nickel ions.

The protein resides in the cytoplasm. The catalysed reaction is urea + 2 H2O + H(+) = hydrogencarbonate + 2 NH4(+). It functions in the pathway nitrogen metabolism; urea degradation; CO(2) and NH(3) from urea (urease route): step 1/1. The sequence is that of Urease subunit alpha from Synechococcus sp. (strain CC9605).